The following is a 387-amino-acid chain: 3-ketoacyl-CoA thiolase (387 aa).

Cys91 functions as the Acyl-thioester intermediate in the catalytic mechanism. Residues His343 and Cys373 each act as proton acceptor in the active site.

Belongs to the thiolase-like superfamily. Thiolase family. As to quaternary structure, heterotetramer of two alpha chains (FadB) and two beta chains (FadA).

Its subcellular location is the cytoplasm. The enzyme catalyses an acyl-CoA + acetyl-CoA = a 3-oxoacyl-CoA + CoA. The protein operates within lipid metabolism; fatty acid beta-oxidation. Functionally, catalyzes the final step of fatty acid oxidation in which acetyl-CoA is released and the CoA ester of a fatty acid two carbons shorter is formed. The chain is 3-ketoacyl-CoA thiolase from Escherichia coli O6:K15:H31 (strain 536 / UPEC).